The sequence spans 208 residues: Holliday junction resolvase RecU (208 aa).

Thr-86, Asp-88, Glu-101, and Gln-120 together coordinate Mg(2+).

It belongs to the RecU family. Requires Mg(2+) as cofactor.

It localises to the cytoplasm. It carries out the reaction Endonucleolytic cleavage at a junction such as a reciprocal single-stranded crossover between two homologous DNA duplexes (Holliday junction).. Endonuclease that resolves Holliday junction intermediates in genetic recombination. Cleaves mobile four-strand junctions by introducing symmetrical nicks in paired strands. Promotes annealing of linear ssDNA with homologous dsDNA. Required for DNA repair, homologous recombination and chromosome segregation. The sequence is that of Holliday junction resolvase RecU from Lacticaseibacillus casei (strain BL23) (Lactobacillus casei).